Reading from the N-terminus, the 72-residue chain is Small ribosomal subunit protein bS20 (72 aa).

It belongs to the bacterial ribosomal protein bS20 family.

Binds directly to 16S ribosomal RNA. This is Small ribosomal subunit protein bS20 (rpsT) from Aeromonas salmonicida.